The following is a 518-amino-acid chain: Lysine--tRNA ligase (518 aa).

2 residues coordinate Mg(2+): Glu407 and Glu414.

Belongs to the class-II aminoacyl-tRNA synthetase family. As to quaternary structure, homodimer. It depends on Mg(2+) as a cofactor.

Its subcellular location is the cytoplasm. The enzyme catalyses tRNA(Lys) + L-lysine + ATP = L-lysyl-tRNA(Lys) + AMP + diphosphate. The sequence is that of Lysine--tRNA ligase from Helicobacter hepaticus (strain ATCC 51449 / 3B1).